The following is a 65-amino-acid chain: Ferredoxin-like protein in vnf region (65 aa).

4Fe-4S ferredoxin-type domains follow at residues 2-30 and 32-65; these read AMAIDGYECTVCGDCEPVCPTGSIVFRDD and YAIEADSCNECTDVGEPRCLGVCPVDLCIQPLDD. 8 residues coordinate [4Fe-4S] cluster: Cys10, Cys13, Cys16, Cys20, Cys39, Cys42, Cys50, and Cys54.

[4Fe-4S] cluster serves as cofactor.

The protein is Ferredoxin-like protein in vnf region of Azotobacter vinelandii.